We begin with the raw amino-acid sequence, 344 residues long: L-rhamnose-proton symporter (344 aa).

Helical transmembrane passes span 4–24 (AIIL…CFYA), 38–58 (WSIG…YLLL), 68–88 (FSIA…IGNI), 101–121 (MGIG…TPIL), 137–157 (TLLG…AGLL), 175–195 (LILA…MDAA), 207–227 (INSL…GAII), 259–279 (ILFS…YAWG), 290–310 (MSWM…GLLL), and 321–341 (VAVL…VGLG).

Belongs to the L-rhamnose transporter (TC 2.A.7.6) family.

The protein localises to the cell inner membrane. It catalyses the reaction L-rhamnopyranose(in) + H(+)(in) = L-rhamnopyranose(out) + H(+)(out). Its function is as follows. Uptake of L-rhamnose across the cytoplasmic membrane with the concomitant transport of protons into the cell (symport system). The protein is L-rhamnose-proton symporter of Yersinia pseudotuberculosis serotype O:1b (strain IP 31758).